The following is a 2430-amino-acid chain: DNA-directed RNA polymerase subunit beta'' (2430 aa).

Zn(2+)-binding residues include cysteine 336, cysteine 455, cysteine 462, and cysteine 465.

Belongs to the RNA polymerase beta' chain family. RpoC2 subfamily. In terms of assembly, in plastids the minimal PEP RNA polymerase catalytic core is composed of four subunits: alpha, beta, beta', and beta''. When a (nuclear-encoded) sigma factor is associated with the core the holoenzyme is formed, which can initiate transcription. Zn(2+) is required as a cofactor.

It is found in the plastid. Its subcellular location is the chloroplast. It carries out the reaction RNA(n) + a ribonucleoside 5'-triphosphate = RNA(n+1) + diphosphate. Its function is as follows. DNA-dependent RNA polymerase catalyzes the transcription of DNA into RNA using the four ribonucleoside triphosphates as substrates. The sequence is that of DNA-directed RNA polymerase subunit beta'' from Stigeoclonium helveticum (Green alga).